A 263-amino-acid chain; its full sequence is Tryptophan synthase alpha chain (263 aa).

Residues glutamate 49 and aspartate 60 each act as proton acceptor in the active site.

Belongs to the TrpA family. As to quaternary structure, tetramer of two alpha and two beta chains.

It catalyses the reaction (1S,2R)-1-C-(indol-3-yl)glycerol 3-phosphate + L-serine = D-glyceraldehyde 3-phosphate + L-tryptophan + H2O. The protein operates within amino-acid biosynthesis; L-tryptophan biosynthesis; L-tryptophan from chorismate: step 5/5. Its function is as follows. The alpha subunit is responsible for the aldol cleavage of indoleglycerol phosphate to indole and glyceraldehyde 3-phosphate. The polypeptide is Tryptophan synthase alpha chain (Cereibacter sphaeroides (strain ATCC 17029 / ATH 2.4.9) (Rhodobacter sphaeroides)).